We begin with the raw amino-acid sequence, 122 residues long: Large ribosomal subunit protein uL14 (122 aa).

This sequence belongs to the universal ribosomal protein uL14 family. As to quaternary structure, part of the 50S ribosomal subunit. Forms a cluster with proteins L3 and L19. In the 70S ribosome, L14 and L19 interact and together make contacts with the 16S rRNA in bridges B5 and B8.

In terms of biological role, binds to 23S rRNA. Forms part of two intersubunit bridges in the 70S ribosome. The chain is Large ribosomal subunit protein uL14 from Acinetobacter baumannii (strain SDF).